Here is a 305-residue protein sequence, read N- to C-terminus: Aspartate carbamoyltransferase catalytic subunit (305 aa).

2 residues coordinate carbamoyl phosphate: R54 and T55. K83 contacts L-aspartate. Carbamoyl phosphate is bound by residues R104, H132, and Q135. R165 and R226 together coordinate L-aspartate. 2 residues coordinate carbamoyl phosphate: L265 and P266.

This sequence belongs to the aspartate/ornithine carbamoyltransferase superfamily. ATCase family. Heterooligomer of catalytic and regulatory chains.

It catalyses the reaction carbamoyl phosphate + L-aspartate = N-carbamoyl-L-aspartate + phosphate + H(+). It functions in the pathway pyrimidine metabolism; UMP biosynthesis via de novo pathway; (S)-dihydroorotate from bicarbonate: step 2/3. Its function is as follows. Catalyzes the condensation of carbamoyl phosphate and aspartate to form carbamoyl aspartate and inorganic phosphate, the committed step in the de novo pyrimidine nucleotide biosynthesis pathway. The chain is Aspartate carbamoyltransferase catalytic subunit from Pyrobaculum calidifontis (strain DSM 21063 / JCM 11548 / VA1).